The sequence spans 230 residues: uncharacterized protein (230 aa).

The first 18 residues, 1 to 18 (MRQYTSKSILFMTAIALS), serve as a signal peptide directing secretion.

This is an uncharacterized protein from Pasteurella multocida (strain Pm70).